The primary structure comprises 494 residues: Tripartite motif-containing protein 5 (494 aa).

The residue at position 2 (Ala2) is an N-acetylalanine. The segment at 15 to 59 (CPICLELLTQPLSLDCGHSFCQACLTANHKTSMPDEGERSCPVCR) adopts an RING-type zinc-finger fold. Phosphoserine is present on Ser86. The B box-type zinc-finger motif lies at 91–133 (QKVDHCARHGEKLLLFCQEDRKVICWLCERSQEHRGHHTFLTE). The Zn(2+) site is built by Cys96, His99, Cys118, and His124. The stretch at 132 to 241 (TEEVAQEYQV…LISDLEHRLQ (110 aa)) forms a coiled coil. The required for interaction with GABARAP and for autophagy stretch occupies residues 186–199 (FEQLRHILDWVESN). A B30.2/SPRY domain is found at 282-494 (LKVMLEVLRE…VPMTLCSPSS (213 aa)).

It belongs to the TRIM/RBCC family. In terms of assembly, can form homodimers and homotrimers. In addition to lower-order dimerization, also exhibits a higher-order multimerization and both low- and high-order multimerizations are essential for its restriction activity. Interacts with BTBD1 and BTBD2. Interacts with PSMC4, PSMC5, PSMD7 and HSPA8/HSC70. Interacts (via B30.2/SPRY domain) with HSPA1A/B. Interacts with PSMC2, MAP3K7/TAK1, TAB2 and TAB3. Interacts with SQSTM1. Interacts with TRIM6 and TRIM34. Interacts with ULK1 (phosphorylated form), GABARAP, GABARAPL1, GABARAPL2, MAP1LC3A, MAP1LC3C and BECN1. In terms of processing, degraded in a proteasome-independent fashion in the absence of viral infection but in a proteasome-dependent fashion following exposure to restriction sensitive virus. Autoubiquitinated in a RING finger- and UBE2D2-dependent manner. Monoubiquitinated by TRIM21. Deubiquitinated by Yersinia YopJ. Ubiquitination may not lead to proteasomal degradation.

The protein resides in the cytoplasm. Its subcellular location is the nucleus. It carries out the reaction S-ubiquitinyl-[E2 ubiquitin-conjugating enzyme]-L-cysteine + [acceptor protein]-L-lysine = [E2 ubiquitin-conjugating enzyme]-L-cysteine + N(6)-ubiquitinyl-[acceptor protein]-L-lysine.. It participates in protein modification; protein ubiquitination. Capsid-specific restriction factor that prevents infection from non-host-adapted retroviruses. Blocks viral replication early in the life cycle, after viral entry but before reverse transcription. In addition to acting as a capsid-specific restriction factor, also acts as a pattern recognition receptor that activates innate immune signaling in response to the retroviral capsid lattice. Binding to the viral capsid triggers its E3 ubiquitin ligase activity, and in concert with the heterodimeric ubiquitin conjugating enzyme complex UBE2V1-UBE2N (also known as UBC13-UEV1A complex) generates 'Lys-63'-linked polyubiquitin chains, which in turn are catalysts in the autophosphorylation of the MAP3K7/TAK1 complex (includes TAK1, TAB2, and TAB3). Activation of the MAP3K7/TAK1 complex by autophosphorylation results in the induction and expression of NF-kappa-B and MAPK-responsive inflammatory genes, thereby leading to an innate immune response in the infected cell. Plays a role in regulating autophagy through activation of autophagy regulator BECN1 by causing its dissociation from its inhibitors BCL2 and TAB2. In Symphalangus syndactylus (Siamang), this protein is Tripartite motif-containing protein 5 (TRIM5).